A 298-amino-acid polypeptide reads, in one-letter code: Serine/threonine-protein kinase 1 (298 aa).

The Protein kinase domain maps to 38–276 (FIATRPMFEG…FKSLVSHPWF (239 aa)). Residues 45-53 (FEGGRNNVF) and K65 contribute to the ATP site. The active-site Proton acceptor is D152.

This sequence belongs to the protein kinase superfamily. Ser/Thr protein kinase family.

Its subcellular location is the virion. It localises to the host cytoplasm. It catalyses the reaction L-seryl-[protein] + ATP = O-phospho-L-seryl-[protein] + ADP + H(+). It carries out the reaction L-threonyl-[protein] + ATP = O-phospho-L-threonyl-[protein] + ADP + H(+). Essential for viral replication. It may mediate the virus' progression through DNA replication. This is Serine/threonine-protein kinase 1 from Ornithodoros (relapsing fever ticks).